The primary structure comprises 180 residues: ATP-dependent protease subunit HslV (180 aa).

Residue T7 is part of the active site. Residues A163, C166, and T169 each coordinate Na(+).

It belongs to the peptidase T1B family. HslV subfamily. In terms of assembly, a double ring-shaped homohexamer of HslV is capped on each side by a ring-shaped HslU homohexamer. The assembly of the HslU/HslV complex is dependent on binding of ATP.

The protein resides in the cytoplasm. It carries out the reaction ATP-dependent cleavage of peptide bonds with broad specificity.. Its activity is regulated as follows. Allosterically activated by HslU binding. Its function is as follows. Protease subunit of a proteasome-like degradation complex believed to be a general protein degrading machinery. The chain is ATP-dependent protease subunit HslV from Cytophaga hutchinsonii (strain ATCC 33406 / DSM 1761 / CIP 103989 / NBRC 15051 / NCIMB 9469 / D465).